Reading from the N-terminus, the 185-residue chain is Fimbrial subunit type 1 (185 aa).

Positions 1-22 (MRHKLMTSTIASLMFVAAAAVA) are cleaved as a signal peptide. A disulfide bridge links Cys-46 with Cys-86.

It belongs to the fimbrial protein family.

The protein resides in the fimbrium. The sequence is that of Fimbrial subunit type 1 from Salmonella typhimurium.